The sequence spans 191 residues: Pyridoxal 5'-phosphate synthase subunit PdxT (191 aa).

46–48 (GES) provides a ligand contact to L-glutamine. The active-site Nucleophile is the Cys78. L-glutamine contacts are provided by residues Arg105 and 133–134 (IR). Residues His169 and Glu171 each act as charge relay system in the active site.

The protein belongs to the glutaminase PdxT/SNO family. As to quaternary structure, in the presence of PdxS, forms a dodecamer of heterodimers. Only shows activity in the heterodimer.

It carries out the reaction aldehydo-D-ribose 5-phosphate + D-glyceraldehyde 3-phosphate + L-glutamine = pyridoxal 5'-phosphate + L-glutamate + phosphate + 3 H2O + H(+). The enzyme catalyses L-glutamine + H2O = L-glutamate + NH4(+). It participates in cofactor biosynthesis; pyridoxal 5'-phosphate biosynthesis. Its function is as follows. Catalyzes the hydrolysis of glutamine to glutamate and ammonia as part of the biosynthesis of pyridoxal 5'-phosphate. The resulting ammonia molecule is channeled to the active site of PdxS. In Fervidobacterium nodosum (strain ATCC 35602 / DSM 5306 / Rt17-B1), this protein is Pyridoxal 5'-phosphate synthase subunit PdxT.